Here is a 258-residue protein sequence, read N- to C-terminus: Proteasome subunit alpha (258 aa).

The protein belongs to the peptidase T1A family. As to quaternary structure, the 20S proteasome core is composed of 14 alpha and 14 beta subunits that assemble into four stacked heptameric rings, resulting in a barrel-shaped structure. The two inner rings, each composed of seven catalytic beta subunits, are sandwiched by two outer rings, each composed of seven alpha subunits. The catalytic chamber with the active sites is on the inside of the barrel. Has a gated structure, the ends of the cylinder being occluded by the N-termini of the alpha-subunits. Is capped by the proteasome-associated ATPase, ARC.

It localises to the cytoplasm. Its pathway is protein degradation; proteasomal Pup-dependent pathway. With respect to regulation, the formation of the proteasomal ATPase ARC-20S proteasome complex, likely via the docking of the C-termini of ARC into the intersubunit pockets in the alpha-rings, may trigger opening of the gate for substrate entry. Interconversion between the open-gate and close-gate conformations leads to a dynamic regulation of the 20S proteasome proteolysis activity. Functionally, component of the proteasome core, a large protease complex with broad specificity involved in protein degradation. This chain is Proteasome subunit alpha, found in Nocardia farcinica (strain IFM 10152).